Consider the following 1006-residue polypeptide: Probable protein phosphatase DDB_G0279461 (1006 aa).

Residues 1–12 (MMVPSLSTSISS) show a composition bias toward polar residues. Disordered regions lie at residues 1-119 (MMVP…NNKE), 146-188 (SHAS…RSNS), 214-269 (SSED…NGIR), 312-387 (DAES…PPNQ), 459-513 (NINN…NNIQ), 525-563 (DYNI…NSKF), and 604-642 (GSIP…TSAS). Over residues 59 to 69 (NEEEGTADNEL) the composition is skewed to acidic residues. Positions 65 to 122 (ADNELESLMSLVNDNNNNNNNTSGIDDDNNNDIDDNNNNNNNNNNNNNNNNNNKEGLN) form a coiled coil. Over residues 77–88 (NDNNNNNNNTSG) the composition is skewed to low complexity. Residues 89 to 99 (IDDDNNNDIDD) are compositionally biased toward acidic residues. A compositionally biased stretch (low complexity) spans 100–117 (NNNNNNNNNNNNNNNNNN). Residues 146-158 (SHASVSNQSSNGS) show a composition bias toward polar residues. 3 stretches are compositionally biased toward low complexity: residues 220–234 (SCHN…NKNN), 244–254 (NINNNNNNNCN), and 316–387 (NYNN…PPNQ). Residues 450–516 (KIDNLNKNIN…NNNNNIQDIQ (67 aa)) adopt a coiled-coil conformation. Positions 466-481 (TDSQQPLPSIDVNFSH) are enriched in polar residues. The segment covering 482-511 (NNNNNNNDNDNNNNNNNNNNNNNNNNNNNN) has biased composition (low complexity). Residues 525 to 538 (DYNIQEGNDINNDN) show a composition bias toward polar residues. Low complexity-rich tracts occupy residues 552–561 (SSNNNNNNNS) and 613–639 (NNNN…TTTT). The 262-residue stretch at 744-1005 (DINKRGLKRA…DNISIIVVTL (262 aa)) folds into the PPM-type phosphatase domain. The Mn(2+) site is built by D784, G785, D956, and D996.

It in the C-terminal section; belongs to the PP2C family. The cofactor is Mg(2+). Mn(2+) serves as cofactor.

The catalysed reaction is O-phospho-L-seryl-[protein] + H2O = L-seryl-[protein] + phosphate. It carries out the reaction O-phospho-L-threonyl-[protein] + H2O = L-threonyl-[protein] + phosphate. The polypeptide is Probable protein phosphatase DDB_G0279461 (Dictyostelium discoideum (Social amoeba)).